We begin with the raw amino-acid sequence, 289 residues long: Acetyl-coenzyme A carboxylase carboxyl transferase subunit beta (289 aa).

One can recognise a CoA carboxyltransferase N-terminal domain in the interval 27–289 (LWSKCPSCES…SFMRVPAGAA (263 aa)). 4 residues coordinate Zn(2+): Cys-31, Cys-34, Cys-50, and Cys-53. Residues 31-53 (CPSCESVLYRTDLESNSEVCPKC) form a C4-type zinc finger.

Belongs to the AccD/PCCB family. As to quaternary structure, acetyl-CoA carboxylase is a heterohexamer composed of biotin carboxyl carrier protein (AccB), biotin carboxylase (AccC) and two subunits each of ACCase subunit alpha (AccA) and ACCase subunit beta (AccD). The cofactor is Zn(2+).

It localises to the cytoplasm. It catalyses the reaction N(6)-carboxybiotinyl-L-lysyl-[protein] + acetyl-CoA = N(6)-biotinyl-L-lysyl-[protein] + malonyl-CoA. The protein operates within lipid metabolism; malonyl-CoA biosynthesis; malonyl-CoA from acetyl-CoA: step 1/1. Component of the acetyl coenzyme A carboxylase (ACC) complex. Biotin carboxylase (BC) catalyzes the carboxylation of biotin on its carrier protein (BCCP) and then the CO(2) group is transferred by the transcarboxylase to acetyl-CoA to form malonyl-CoA. The chain is Acetyl-coenzyme A carboxylase carboxyl transferase subunit beta from Methylobacillus flagellatus (strain ATCC 51484 / DSM 6875 / VKM B-1610 / KT).